The primary structure comprises 215 residues: MGQKVHPYGFRLGISKDWKARWINEKNYKEYLLEDLKIRDYIKKTYHSAGVSDIFIERPEPGKVSITIKCARPGVIIGRKGSEVKKLRAGLERLINRKFQLNIEEVKTPETDALLVAEDIASRIEKRASYKRAMKRAIFTAMRKGAKGIKIMVSGRLNGAEIARTEWYLEGRLPLQTLKSDIDYGYTTALTKMGIIGVRVWIYKGDVAQKKATEA.

Residues 38 to 107 (IRDYIKKTYH…KFQLNIEEVK (70 aa)) form the KH type-2 domain.

Belongs to the universal ribosomal protein uS3 family. In terms of assembly, part of the 30S ribosomal subunit. Forms a tight complex with proteins S10 and S14.

Binds the lower part of the 30S subunit head. Binds mRNA in the 70S ribosome, positioning it for translation. The chain is Small ribosomal subunit protein uS3 from Kosmotoga olearia (strain ATCC BAA-1733 / DSM 21960 / TBF 19.5.1).